A 223-amino-acid polypeptide reads, in one-letter code: F420-dependent NADP reductase (223 aa).

NADP(+) is bound by residues 9–12, 30–31, lysine 35, leucine 75, and valine 101; these read TGDQ and SR.

It belongs to the F420-dependent NADP reductase family.

The catalysed reaction is reduced coenzyme F420-(gamma-L-Glu)(n) + NADP(+) = oxidized coenzyme F420-(gamma-L-Glu)(n) + NADPH + 2 H(+). Its function is as follows. Catalyzes the reduction of NADP(+) with F420H(2) via hydride transfer, and the reverse reaction, i.e. the reduction of F420 with NADPH. Probably functions in the regeneration of NADPH required in biosynthetic reactions. The chain is F420-dependent NADP reductase (fno) from Methanocaldococcus jannaschii (strain ATCC 43067 / DSM 2661 / JAL-1 / JCM 10045 / NBRC 100440) (Methanococcus jannaschii).